Here is a 165-residue protein sequence, read N- to C-terminus: Crossover junction endodeoxyribonuclease RuvC (165 aa).

Residues aspartate 7, glutamate 67, and aspartate 140 contribute to the active site. Mg(2+) contacts are provided by aspartate 7, glutamate 67, and aspartate 140.

It belongs to the RuvC family. In terms of assembly, homodimer which binds Holliday junction (HJ) DNA. The HJ becomes 2-fold symmetrical on binding to RuvC with unstacked arms; it has a different conformation from HJ DNA in complex with RuvA. In the full resolvosome a probable DNA-RuvA(4)-RuvB(12)-RuvC(2) complex forms which resolves the HJ. The cofactor is Mg(2+).

Its subcellular location is the cytoplasm. The catalysed reaction is Endonucleolytic cleavage at a junction such as a reciprocal single-stranded crossover between two homologous DNA duplexes (Holliday junction).. In terms of biological role, the RuvA-RuvB-RuvC complex processes Holliday junction (HJ) DNA during genetic recombination and DNA repair. Endonuclease that resolves HJ intermediates. Cleaves cruciform DNA by making single-stranded nicks across the HJ at symmetrical positions within the homologous arms, yielding a 5'-phosphate and a 3'-hydroxyl group; requires a central core of homology in the junction. The consensus cleavage sequence is 5'-(A/T)TT(C/G)-3'. Cleavage occurs on the 3'-side of the TT dinucleotide at the point of strand exchange. HJ branch migration catalyzed by RuvA-RuvB allows RuvC to scan DNA until it finds its consensus sequence, where it cleaves and resolves the cruciform DNA. This is Crossover junction endodeoxyribonuclease RuvC from Dehalococcoides mccartyi (strain ATCC BAA-2266 / KCTC 15142 / 195) (Dehalococcoides ethenogenes (strain 195)).